A 420-amino-acid polypeptide reads, in one-letter code: MGEKPGTRVFKKSSPNCKLTVYLGKRDFVDHLDKVDPVDGVVLVDPDYLKDRKVFVTLTCAFRYGREDLDVLGLSFRKDLFIANYQAFPPTPNPPRPPTRLQERLLRKLGQHAHPFFFTIPQNLPCSVTLQPGPEDTGKACGVDFEIRAFCAKSLEEKSHKRNSVRLVIRKVQFAPEKPGPQPSAETTRHFLMSDRSLHLEASLDKELYYHGEPLNVNVHVTNNSTKTVKKIKVSVRQYADICLFSTAQYKCPVAQVEQDDQVSPSSTFCKVYTITPLLSNNREKRGLALDGKLKHEDTNLASSTIVKEGANKEVLGILVSYRVKVKLVVSRGGDVSVELPFVLMHPKPHDHIALPRPQSAATHPPTLLPSAVPETDAPVDTNLIEFETNYATDDDIVFEDFARLRLKGLKDEDYDDQFC.

Tyr48 carries the post-translational modification Phosphotyrosine. 2 positions are modified to hydroxyproline; by PHD2: Pro176 and Pro181. Residues 240–409 (ADICLFSTAQ…EDFARLRLKG (170 aa)) are interaction with TRAF6. Position 360 is a phosphoserine (Ser360). The segment at 374-420 (PETDAPVDTNLIEFETNYATDDDIVFEDFARLRLKGLKDEDYDDQFC) is interaction with AP2B1. Thr393 carries the phosphothreonine modification. The [DE]-X(1,2)-F-X-X-[FL]-X-X-X-R motif signature appears at 396-406 (DIVFEDFARLR).

The protein belongs to the arrestin family. As to quaternary structure, homooligomer; the self-association is mediated by InsP6-binding. Heterooligomer with ARRB1; the association is mediated by InsP6-binding. Interacts with ADRB2 and CHRM2. Interacts with PDE4A. Interacts with PDE4D. Interacts with MAPK10, MAPK1 and MAPK3. Interacts with DRD2. Interacts with FSHR. Interacts with CLTC. Interacts with HTR2C. Interacts with CRR5. Interacts with CXCR4. Interacts with SRC. Interacts with DUSP16; the interaction is interrupted by stimulation of AGTR1 and activation of MAPK10. Interacts with CHUK; the interaction is enhanced stimulation of ADRB2. Interacts with RELA. Interacts with MDM2; the interaction is enhanced by activation of GPCRs. Interacts with SLC9A5. Interacts with TRAF6. Interacts with IGF1R. Interacts with ENG. Interacts with KIR2DL1, KIR2DL3 and KIR2DL4. Interacts with LDLR. Interacts with AP2B1. Interacts with C5AR1. Interacts with RAF1. Interacts with MAP2K1. Interacts with MAPK1. Interacts with MAPK10; the interaction enhances MAPK10 activation by MAP3K5. Interacts with MAP2K4; the interaction is enhanced by presence of MAP3K5 and MAPK10. Interacts with MAP3K5. Interacts with AKT1. Interacts with IKBKB and MAP3K14. Interacts with SMO (activated). Interacts with GSK3A and GSK3B. Associates with protein phosphatase 2A (PP2A). Interacts with CXCR4; the interaction is dependent on C-terminal phosphorylation of CXCR4 and allows activation of MAPK1 and MAPK3. Interacts with GPR143. Interacts with HCK and CXCR1 (phosphorylated). Interacts with ACKR3 and ACKR4. Interacts with ARRDC1; the interaction is direct. Interacts with GPR61, GPR62 and GPR135. Interacts (via NACHT and LRR domains) with NLRP3; this interaction is direct and inducible by omega-3 polyunsaturated fatty acids (PUFAs). Interacts with FFAR4 (via C-terminus); this interaction is stimulated by long-chain fatty acids (LCFAs). Interacts with GPR35. Interacts with GPR84. Interacts with TIGIT; this interaction inhibits the NF-kappa-B pathway. Interacts with TGFBR3. Phosphorylated at Thr-382 in the cytoplasm; probably dephosphorylated at the plasma membrane. The phosphorylation does not regulate internalization and recycling of ADRB2, interaction with clathrin or AP2B1. Post-translationally, the ubiquitination status appears to regulate the formation and trafficking of beta-arrestin-GPCR complexes and signaling. Ubiquitination appears to occur GPCR-specific. Ubiquitinated by MDM2; the ubiquitination is required for rapid internalization of ADRB2. Deubiquitinated by USP33; the deubiquitination leads to a dissociation of the beta-arrestin-GPCR complex. Stimulation of a class A GPCR, such as ADRB2, induces transient ubiquitination and subsequently promotes association with USP33. Stimulation of a class B GPCR promotes a sustained ubiquitination. Deubiquitinated by USP20; allowing USP20 to deubiquitinate TRAF6 leading to inhibition of NF-kappa-B signaling. In terms of processing, hydroxylation by PHD2 modulates the rate of internalization by slowing down recruitment to the plasma membrane and inhibiting subsequent co-internalization with class A receptors. As to expression, found in a variety of tissues. The short isoform is the most abundant form in all tissues.

Its subcellular location is the cytoplasm. The protein resides in the nucleus. It localises to the cell membrane. The protein localises to the membrane. It is found in the clathrin-coated pit. Its subcellular location is the cytoplasmic vesicle. Functionally, functions in regulating agonist-mediated G-protein coupled receptor (GPCR) signaling by mediating both receptor desensitization and resensitization processes. During homologous desensitization, beta-arrestins bind to the GPRK-phosphorylated receptor and sterically preclude its coupling to the cognate G-protein; the binding appears to require additional receptor determinants exposed only in the active receptor conformation. The beta-arrestins target many receptors for internalization by acting as endocytic adapters (CLASPs, clathrin-associated sorting proteins) and recruiting the GPRCs to the adapter protein 2 complex 2 (AP-2) in clathrin-coated pits (CCPs). However, the extent of beta-arrestin involvement appears to vary significantly depending on the receptor, agonist and cell type. Internalized arrestin-receptor complexes traffic to intracellular endosomes, where they remain uncoupled from G-proteins. Two different modes of arrestin-mediated internalization occur. Class A receptors, like ADRB2, OPRM1, ENDRA, D1AR and ADRA1B dissociate from beta-arrestin at or near the plasma membrane and undergo rapid recycling. Class B receptors, like AVPR2, AGTR1, NTSR1, TRHR and TACR1 internalize as a complex with arrestin and traffic with it to endosomal vesicles, presumably as desensitized receptors, for extended periods of time. Receptor resensitization then requires that receptor-bound arrestin is removed so that the receptor can be dephosphorylated and returned to the plasma membrane. Mediates endocytosis of CCR7 following ligation of CCL19 but not CCL21. Involved in internalization of P2RY1, P2RY4, P2RY6 and P2RY11 and ATP-stimulated internalization of P2RY2. Involved in phosphorylation-dependent internalization of OPRD1 and subsequent recycling or degradation. Involved in ubiquitination of IGF1R. Beta-arrestins function as multivalent adapter proteins that can switch the GPCR from a G-protein signaling mode that transmits short-lived signals from the plasma membrane via small molecule second messengers and ion channels to a beta-arrestin signaling mode that transmits a distinct set of signals that are initiated as the receptor internalizes and transits the intracellular compartment. Acts as a signaling scaffold for MAPK pathways such as MAPK1/3 (ERK1/2) and MAPK10 (JNK3). ERK1/2 and JNK3 activated by the beta-arrestin scaffold are largely excluded from the nucleus and confined to cytoplasmic locations such as endocytic vesicles, also called beta-arrestin signalosomes. Acts as a signaling scaffold for the AKT1 pathway. GPCRs for which the beta-arrestin-mediated signaling relies on both ARRB1 and ARRB2 (codependent regulation) include ADRB2, F2RL1 and PTH1R. For some GPCRs the beta-arrestin-mediated signaling relies on either ARRB1 or ARRB2 and is inhibited by the other respective beta-arrestin form (reciprocal regulation). Increases ERK1/2 signaling in AGTR1- and AVPR2-mediated activation (reciprocal regulation). Involved in CCR7-mediated ERK1/2 signaling involving ligand CCL19. Is involved in type-1A angiotensin II receptor/AGTR1-mediated ERK activity. Is involved in type-1A angiotensin II receptor/AGTR1-mediated MAPK10 activity. Is involved in dopamine-stimulated AKT1 activity in the striatum by disrupting the association of AKT1 with its negative regulator PP2A. Involved in AGTR1-mediated chemotaxis. Appears to function as signaling scaffold involved in regulation of MIP-1-beta-stimulated CCR5-dependent chemotaxis. Involved in attenuation of NF-kappa-B-dependent transcription in response to GPCR or cytokine stimulation by interacting with and stabilizing CHUK. Suppresses UV-induced NF-kappa-B-dependent activation by interacting with CHUK. The function is promoted by stimulation of ADRB2 and dephosphorylation of ARRB2. Involved in p53/TP53-mediated apoptosis by regulating MDM2 and reducing the MDM2-mediated degradation of p53/TP53. May serve as nuclear messenger for GPCRs. Upon stimulation of OR1D2, may be involved in regulation of gene expression during the early processes of fertilization. Also involved in regulation of receptors other than GPCRs. Involved in endocytosis of TGFBR2 and TGFBR3 and down-regulates TGF-beta signaling such as NF-kappa-B activation. Involved in endocytosis of low-density lipoprotein receptor/LDLR. Involved in endocytosis of smoothened homolog/Smo, which also requires GRK2. Involved in endocytosis of SLC9A5. Involved in endocytosis of ENG and subsequent TGF-beta-mediated ERK activation and migration of epithelial cells. Involved in Toll-like receptor and IL-1 receptor signaling through the interaction with TRAF6 which prevents TRAF6 autoubiquitination and oligomerization required for activation of NF-kappa-B and JUN. Involved in insulin resistance by acting as insulin-induced signaling scaffold for SRC, AKT1 and INSR. Involved in regulation of inhibitory signaling of natural killer cells by recruiting PTPN6 and PTPN11 to KIR2DL1. Involved in IL8-mediated granule release in neutrophils. Involved in the internalization of the atypical chemokine receptor ACKR3. Acts as an adapter protein coupling FFAR4 receptor to specific downstream signaling pathways, as well as mediating receptor endocytosis. During the activation step of NLRP3 inflammasome, directly associates with NLRP3 leading to inhibition of pro-inflammatory cytokine release and inhibition of inflammation. The protein is Beta-arrestin-2 (ARRB2) of Bos taurus (Bovine).